The primary structure comprises 419 residues: Indole prenyltransferase tdiB (419 aa).

An L-tryptophan-binding site is contributed by 58 to 59; that stretch reads PS. 8 residues coordinate substrate: Arg81, Lys165, Tyr167, Arg236, Lys238, Tyr240, Tyr330, and Tyr394.

This sequence belongs to the tryptophan dimethylallyltransferase family.

The enzyme catalyses didemethylasterriquinone D + dimethylallyl diphosphate = asterriquinone C1 + diphosphate. It participates in secondary metabolite biosynthesis. Indole prenyltransferase; part of the gene cluster that mediates the biosynthesis of terrequinone A, an antitumor agent. The first step in the biosynthetic pathway for terrequinone A is formation of indole pyruvic acid (IPA) from L-tryptophan by the aminotransferase tdiD. The nonribosomal peptide synthase tdiA then immediately converts unstable IPA to didemethylasterriquinone D (DDAQ D), via condensation of 2 IPA molecules. The symmetric connectivity of the 2 IPA molecules is thought to arise by head-to-tail dual Claisen condensations facilitated by the TE domain. TdiB then catalyzes reverse prenylation by transferring dimethylallyl diphosphate to carbon atom 2' of DDAQ D, to yield asterriquinone C-1. Finally, tdiC and tdiE enzymes robustly convert asterriquinone C-1 to terrequinone A via a transformation involving regular prenylation at carbon atom 5, which requires elimination of the hydroxy group on C-5. The polypeptide is Indole prenyltransferase tdiB (Emericella nidulans (strain FGSC A4 / ATCC 38163 / CBS 112.46 / NRRL 194 / M139) (Aspergillus nidulans)).